Consider the following 227-residue polypeptide: uncharacterized protein (227 aa).

Helical transmembrane passes span 15 to 34 (FIAAEALYSSIIFLICFLIY), 55 to 77 (TFLFLGLAYFLRFVVLLLSASGV), 92 to 114 (AFSMAFLAYSGSAAILYTIYSLL), 121 to 140 (FPGEVVINGVALVIALTSLL), 145 to 167 (LVFLISQLALVFLLVAAIFVNYS), 180 to 202 (PLYILLFVFWLLNISLTFRFLPL), and 206 to 224 (FAIYTLSVAVILIIAYRVL).

The protein resides in the cell membrane. This is an uncharacterized protein from Archaeoglobus fulgidus (strain ATCC 49558 / DSM 4304 / JCM 9628 / NBRC 100126 / VC-16).